We begin with the raw amino-acid sequence, 55 residues long: Eclosion hormone (55 aa).

It belongs to the insect eclosion hormone family.

It localises to the secreted. Functionally, neuropeptide that triggers the performance of ecdysis behaviors at the end of a molt. It triggers adult behavior patterns: larval, pupal and adult ecdysis, and plasticization during the molt. The chain is Eclosion hormone from Romalea microptera (Eastern lubber grasshopper).